Consider the following 712-residue polypeptide: Ribosomal RNA large subunit methyltransferase K/L (712 aa).

The THUMP domain maps to 46 to 157; the sequence is GAYQALLHSR…RENMVVSLDL (112 aa).

It belongs to the methyltransferase superfamily. RlmKL family.

It localises to the cytoplasm. It catalyses the reaction guanosine(2445) in 23S rRNA + S-adenosyl-L-methionine = N(2)-methylguanosine(2445) in 23S rRNA + S-adenosyl-L-homocysteine + H(+). The enzyme catalyses guanosine(2069) in 23S rRNA + S-adenosyl-L-methionine = N(2)-methylguanosine(2069) in 23S rRNA + S-adenosyl-L-homocysteine + H(+). Its function is as follows. Specifically methylates the guanine in position 2445 (m2G2445) and the guanine in position 2069 (m7G2069) of 23S rRNA. The sequence is that of Ribosomal RNA large subunit methyltransferase K/L from Actinobacillus pleuropneumoniae serotype 3 (strain JL03).